The primary structure comprises 82 residues: Small ribosomal subunit protein bS16 (82 aa).

It belongs to the bacterial ribosomal protein bS16 family.

The sequence is that of Small ribosomal subunit protein bS16 from Pasteurella multocida (strain Pm70).